The chain runs to 495 residues: Maintenance of mitochondrial morphology protein 1 (495 aa).

The Lumenal portion of the chain corresponds to 1–22 (MALQQHEPAPFAPQSSLSFTQG). Residues 23 to 43 (FLLGQLSVVLLIGAFIKFFIF) traverse the membrane as a helical segment. At 44 to 495 (GEAPPPPSRG…PVGTPGIPDN (452 aa)) the chain is on the cytoplasmic side. Disordered stretches follow at residues 63–94 (YSSV…PSTS), 269–320 (ASTE…SPKS), 382–428 (WPRM…EPEG), and 440–495 (GLGA…IPDN). 2 stretches are compositionally biased toward polar residues: residues 65–74 (SVYSPPQDSQ) and 82–94 (STSN…PSTS). The region spanning 128–379 (QPESLDWFNV…EPRVQVVGLP (252 aa)) is the SMP-LTD domain. Pro residues predominate over residues 271–289 (TEPPEPLQTPAGSPAPPTS). Residues 418-428 (FSDDHGREPEG) are compositionally biased toward basic and acidic residues. Polar residues predominate over residues 458 to 469 (RSSSMTRQQSGG).

This sequence belongs to the MMM1 family. In terms of assembly, homodimer. Component of the ER-mitochondria encounter structure (ERMES) or MDM complex, composed of mmm1, mdm10, mdm12 and mdm34. An MMM1 homodimer associates with one molecule of mdm12 on each side in a pairwise head-to-tail manner, and the SMP-LTD domains of mmm1 and mdm12 generate a continuous hydrophobic tunnel for phospholipid trafficking.

The protein localises to the endoplasmic reticulum membrane. Component of the ERMES/MDM complex, which serves as a molecular tether to connect the endoplasmic reticulum (ER) and mitochondria. Components of this complex are involved in the control of mitochondrial shape and protein biogenesis, and function in nonvesicular lipid trafficking between the ER and mitochondria. The mdm12-mmm1 subcomplex functions in the major beta-barrel assembly pathway that is responsible for biogenesis of all outer membrane beta-barrel proteins, and acts in a late step after the SAM complex. The mdm10-mdm12-mmm1 subcomplex further acts in the TOM40-specific pathway after the action of the mdm12-mmm1 complex. Essential for establishing and maintaining the structure of mitochondria and maintenance of mtDNA nucleoids. The sequence is that of Maintenance of mitochondrial morphology protein 1 from Penicillium rubens (strain ATCC 28089 / DSM 1075 / NRRL 1951 / Wisconsin 54-1255) (Penicillium chrysogenum).